Consider the following 212-residue polypeptide: Peptide methionine sulfoxide reductase MsrA (212 aa).

C52 is an active-site residue.

Belongs to the MsrA Met sulfoxide reductase family.

The catalysed reaction is L-methionyl-[protein] + [thioredoxin]-disulfide + H2O = L-methionyl-(S)-S-oxide-[protein] + [thioredoxin]-dithiol. The enzyme catalyses [thioredoxin]-disulfide + L-methionine + H2O = L-methionine (S)-S-oxide + [thioredoxin]-dithiol. Its function is as follows. Has an important function as a repair enzyme for proteins that have been inactivated by oxidation. Catalyzes the reversible oxidation-reduction of methionine sulfoxide in proteins to methionine. In Cronobacter sakazakii (strain ATCC BAA-894) (Enterobacter sakazakii), this protein is Peptide methionine sulfoxide reductase MsrA.